Here is a 504-residue protein sequence, read N- to C-terminus: Cytochrome P450 2K1 (504 aa).

Residue C447 participates in heme binding.

Belongs to the cytochrome P450 family. Heme serves as cofactor.

It is found in the endoplasmic reticulum membrane. Its subcellular location is the microsome membrane. The catalysed reaction is an organic molecule + reduced [NADPH--hemoprotein reductase] + O2 = an alcohol + oxidized [NADPH--hemoprotein reductase] + H2O + H(+). The polypeptide is Cytochrome P450 2K1 (cyp2k1) (Oncorhynchus mykiss (Rainbow trout)).